The chain runs to 148 residues: Protein SprT-like (148 aa).

Positions 6-147 (LQQLVATISM…CGRCQGPIKL (142 aa)) constitute a SprT-like domain. His67 contributes to the Zn(2+) binding site. Glu68 is a catalytic residue. Residue His71 coordinates Zn(2+).

This sequence belongs to the SprT family. The cofactor is Zn(2+).

It is found in the cytoplasm. The chain is Protein SprT-like from Lactiplantibacillus plantarum (strain ATCC BAA-793 / NCIMB 8826 / WCFS1) (Lactobacillus plantarum).